Here is a 1063-residue protein sequence, read N- to C-terminus: Structural polyprotein (1063 aa).

The tract at residues 1–131 (MASTTPITME…LGPPTNPFQA (131 aa)) is disordered. The human C1QBP/SF2P32-binding stretch occupies residues 30–69 (GASQSRRPRPPRQRDSSTSGDDSGRDSGGPRRRRGNRGRG). Residue serine 46 is modified to Phosphoserine; by host. Over residues 70–87 (QLRDWSRAPPPPEERQES) the composition is skewed to basic and acidic residues. Pro residues predominate over residues 93-107 (APKPSRAPPQQPQPP). Cysteines 153 and 197 form a disulfide. Residues 279–300 (GAPQAFLAGLLLAAVAVGTARA) are functions as E2 signal peptide. The Extracellular segment spans residues 301 to 534 (GLQPRADMAA…LWLATANALS (234 aa)). N-linked (GlcNAc...) asparagine; by host glycans are attached at residues asparagine 353, asparagine 371, asparagine 410, and asparagine 429. Residues 535–555 (LDHALAAFVLLVPWVLIFMVC) form a helical membrane-spanning segment. Over 556–582 (RRACRRRGAAAALTAVVLQGYNPPAYG) the chain is Cytoplasmic. The tract at residues 563–582 (GAAAALTAVVLQGYNPPAYG) is functions as E1 signal peptide. Over 583-1028 (EEAFTYLCTA…QTWAEWAAAH (446 aa)) the chain is Extracellular. Disulfide bonds link cysteine 590–cysteine 595, cysteine 619–cysteine 824, cysteine 641–cysteine 653, cysteine 699–cysteine 712, cysteine 758–cysteine 767, cysteine 807–cysteine 817, cysteine 931–cysteine 934, and cysteine 950–cysteine 983. N-linked (GlcNAc...) asparagine; by host glycosylation is present at asparagine 658. Ca(2+) contacts are provided by asparagine 670 and alanine 671. Ca(2+)-binding residues include aspartate 718 and threonine 719. 2 N-linked (GlcNAc...) asparagine; by host glycosylation sites follow: asparagine 759 and asparagine 791. 2 O-linked (GalNAc...) threonine; by host glycosylation sites follow: threonine 1011 and threonine 1012. Residues 1029–1049 (WWQLTLGAICALLLAGLLACC) form a helical membrane-spanning segment. The Extracellular portion of the chain corresponds to 1050 to 1063 (AKCLYYLRGAIAPR).

In terms of assembly, homodimer; further assembles into homooligomer. Interacts with human C1QBP. Interacts (via N-terminus) with protease/methyltransferase p150. As to quaternary structure, heterodimer with spike glycoprotein E2. Heterodimer with spike glycoprotein E1. Post-translationally, structural polyprotein: Specific enzymatic cleavages in vivo yield mature proteins. Two signal peptidase-mediated cleavages within the polyprotein produce the structural proteins capsid, E2, and E1. The E2 signal peptide remains attached to the C-terminus of the capsid protein after cleavage by the signal peptidase. Another signal peptide at E2 C-terminus directs E1 to the ER, with a similar mechanism. In terms of processing, contains three N-linked oligosaccharides. Capsid is phosphorylated on Ser-46 by host. This phosphorylation negatively regulates capsid protein RNA-binding activity. Dephosphorylated by human PP1A.

Its subcellular location is the virion. The protein localises to the host cytoplasm. It localises to the host mitochondrion. It is found in the virion membrane. The protein resides in the host Golgi apparatus membrane. Capsid protein interacts with genomic RNA and assembles into icosahedric core particles 65-70 nm in diameter. The resulting nucleocapsid eventually associates with the cytoplasmic domain of E2 at the cell membrane, leading to budding and formation of mature virions from host Golgi membranes. Phosphorylation negatively regulates RNA-binding activity, possibly delaying virion assembly during the viral replication phase. Capsid protein dimerizes and becomes disulfide-linked in the virion. Modulates genomic RNA replication. Modulates subgenomic RNA synthesis by interacting with human C1QBP/SF2P32. Induces both perinuclear clustering of mitochondria and the formation of electron-dense intermitochondrial plaques, both hallmarks of rubella virus infected cells. Induces apoptosis when expressed in transfected cells. Its function is as follows. Responsible for viral attachment to target host cell, by binding to the cell receptor. Its transport to the plasma membrane depends on interaction with E1 protein. The surface glycoproteins display an irregular helical organization and a pseudo-tetrameric inner nucleocapsid arrangement. Functionally, class II viral fusion protein. Fusion activity is inactive as long as E1 is bound to E2 in mature virion. After virus attachment to target cell and clathrin-mediated endocytosis, acidification of the endosome would induce dissociation of E1/E2 heterodimer and concomitant trimerization of the E1 subunits. This E1 homotrimer is fusion active, and promotes release of viral nucleocapsid in cytoplasm after endosome and viral membrane fusion. The cytoplasmic tail of spike glycoprotein E1 modulates virus release. The surface glycoproteins display an irregular helical organization and a pseudo-tetrameric inner nucleocapsid arrangement. The chain is Structural polyprotein from Rubella virus (strain TO-336 vaccine) (RUBV).